Here is a 150-residue protein sequence, read N- to C-terminus: MRILGLDYGEKRIGVALCDELGLTAQALTTVIRKSWRNDVGIIASLVRTYDVEKIVIGYPLRLDGTEGIQCEKVVRFARRLEAALGIPVIRWDETLTTKEAEEILSRSGVPPRKRRGVVDRLAASLILQSYLDAISQEKIPSDACDANES.

Belongs to the YqgF nuclease family.

The protein localises to the cytoplasm. Could be a nuclease involved in processing of the 5'-end of pre-16S rRNA. The sequence is that of Putative pre-16S rRNA nuclease from Syntrophus aciditrophicus (strain SB).